A 500-amino-acid chain; its full sequence is MPRPADTYTHDQGHLQNCPEYVAWRVAGNGQELAPTNPYNATGRRAFADSYGFDNSNLDLRPDQEVPTMQRIRSTLDMSKYFDEFFDDSLDHKCARVRCRSCGFVRAKNATRQADHLTQCKDFLATDEGEELMASGSLVHNVQQHQPPAIWNGARPHPDLMVRHLSNHPPSGTVPVGPCSRPEPSRASQRPEPPSLAQHLLDQSDDLLTNAVQHSFLAHAGSGSLSENDFNQWLAQIGYISRSLVPFTGALIGKIRIPETGNLEHDSTFRCLDLLCSAVTNMKKELEFLEATKREYGLEVGLDEPRPATKSFIDLFNSASCASATLLEGMVLLWAVEILFYNSFSYAGSFVAQPMPTQERSSFSLPSYSLPSSASPGAYSGQTIRKDRHTTALREAFIKNWKSENFSQFVDVCKSIVDELAMDQMTGNGRADTSACERVFNQAVWLWAQVFPQTTGIRTGHEDSSRDGGRENKAMNRNRSTGNSVEIEDEYNVQTSTQLE.

Disordered stretches follow at residues 161–197 (MVRH…PSLA) and 457–500 (IRTG…TQLE). A compositionally biased stretch (basic and acidic residues) spans 459 to 474 (TGHEDSSRDGGRENKA). A compositionally biased stretch (polar residues) spans 475–484 (MNRNRSTGNS).

The protein localises to the nucleus. The two putative transcription factors FPSE_09188 and FPSE_09189 could be responsible for orchestrating expression of the W493 A and B biosynthesis cluster genes. W493 A and B consist of six amino acid residues D-allo-thr, L-Ala, D-Ala, L-Gln, D-Tyr, and L-Val/L-Ile linked to a 3-hydroxy-4-methyltetradecanoic acid polyketide chain. This Fusarium pseudograminearum (strain CS3096) (Wheat and barley crown-rot fungus) protein is Probable transcription factor FPSE_09189.